Here is a 282-residue protein sequence, read N- to C-terminus: Small ribosomal subunit protein uS3 (282 aa).

The KH type-2 domain occupies 43–111 (IRRLMSKGME…QVQLNILEVK (69 aa)). Residues 217–282 (AQSQAAAPRA…IGKGSNGTEA (66 aa)) are disordered. A compositionally biased stretch (basic and acidic residues) spans 228-240 (RRNERGDRPDRGA). Residues 256-269 (AVATGSAPTGTAAT) are compositionally biased toward low complexity.

This sequence belongs to the universal ribosomal protein uS3 family. As to quaternary structure, part of the 30S ribosomal subunit. Forms a tight complex with proteins S10 and S14.

In terms of biological role, binds the lower part of the 30S subunit head. Binds mRNA in the 70S ribosome, positioning it for translation. This Kineococcus radiotolerans (strain ATCC BAA-149 / DSM 14245 / SRS30216) protein is Small ribosomal subunit protein uS3.